A 303-amino-acid polypeptide reads, in one-letter code: Ribosomal protein uL3 glutamine methyltransferase (303 aa).

The protein belongs to the protein N5-glutamine methyltransferase family. PrmB subfamily.

The enzyme catalyses L-glutaminyl-[ribosomal protein uL3] + S-adenosyl-L-methionine = N(5)-methyl-L-glutaminyl-[ribosomal protein uL3] + S-adenosyl-L-homocysteine + H(+). In terms of biological role, methylates large ribosomal subunit protein uL3 on a specific glutamine residue. This Neisseria meningitidis serogroup B (strain ATCC BAA-335 / MC58) protein is Ribosomal protein uL3 glutamine methyltransferase.